Consider the following 118-residue polypeptide: Vesicle-associated membrane protein 1 (118 aa).

Over residues methionine 1–alanine 15 the composition is skewed to low complexity. The segment at methionine 1–glutamine 36 is disordered. Residues methionine 1 to lysine 96 lie on the Cytoplasmic side of the membrane. The region spanning arginine 33–lysine 93 is the v-SNARE coiled-coil homology domain. Residue serine 63 is modified to Phosphoserine. Residues methionine 97 to phenylalanine 116 form a helical; Anchor for type IV membrane protein membrane-spanning segment. Topologically, residues phenylalanine 117–alanine 118 are vesicular.

This sequence belongs to the synaptobrevin family. In terms of assembly, interacts with VAPA and VAPB.

Its subcellular location is the cytoplasmic vesicle. It localises to the secretory vesicle. It is found in the synaptic vesicle membrane. The protein localises to the synapse. The protein resides in the synaptosome. Its subcellular location is the cytoplasmic vesicle membrane. Its function is as follows. Involved in the targeting and/or fusion of transport vesicles to their target membrane. The sequence is that of Vesicle-associated membrane protein 1 (VAMP1) from Bos taurus (Bovine).